Consider the following 254-residue polypeptide: Distal membrane-arm assembly complex protein 2 (254 aa).

Residue Ser-250 is modified to Phosphoserine.

Belongs to the ATP synthase subunit s family. Interacts with incompletely assembled mitochondrial NADH:ubiquinone oxidoreductase complex (complex I).

The protein resides in the mitochondrion. Required for the assembly of the mitochondrial NADH:ubiquinone oxidoreductase complex (complex I). Involved in the assembly of the distal region of complex I. The sequence is that of Distal membrane-arm assembly complex protein 2 from Rattus norvegicus (Rat).